Reading from the N-terminus, the 430-residue chain is MTSVVVVGTQWGDEGKGKITDFLSADAEVIARYQGGDNAGHTIVIDGKKFKLHLIPSGIFFPQKISVIGNGVVVNPKSLVKELAYLHDEGVTTDNLRISDRAHVILPYHIQLDQLQEDAKGDNKIGTTIKGIGPAYMDKAARVGIRIADLLDKDIFAERLRINLAEKNRLFEKMYNSTPLDFDAIFEEYYAYGQEIKQYVTDTSVILNDALDAGKRVLFEGAQGVMLDIDQGTYPFVTSSNPVAGGVTIGSGVGPSKINKVVGVCKAYTSRVGDGPFPTELFDEVGERIREVGHEYGTTTGRPRRVGWFDSVVMRHSRRVSGITNLSLNSIDVLSGLDTVKICVAYDLDGKRIDYYPASLEQLKRCKPIYEELPGWQEDITGVRSLDELPENARNYVRRVGELVGVRISTFSVGPGREQTNILESVWASI.

GTP-binding positions include 12-18 and 40-42; these read GDEGKGK and GHT. Aspartate 13 serves as the catalytic Proton acceptor. Positions 13 and 40 each coordinate Mg(2+). IMP-binding positions include 13–16, 38–41, threonine 128, arginine 142, glutamine 223, threonine 238, and arginine 302; these read DEGK and NAGH. The active-site Proton donor is histidine 41. 298–304 lines the substrate pocket; the sequence is TTTGRPR. GTP-binding positions include arginine 304, 330–332, and 412–414; these read SID and SVG.

Belongs to the adenylosuccinate synthetase family. Homodimer. Requires Mg(2+) as cofactor.

Its subcellular location is the cytoplasm. The catalysed reaction is IMP + L-aspartate + GTP = N(6)-(1,2-dicarboxyethyl)-AMP + GDP + phosphate + 2 H(+). Its pathway is purine metabolism; AMP biosynthesis via de novo pathway; AMP from IMP: step 1/2. Plays an important role in the de novo pathway of purine nucleotide biosynthesis. Catalyzes the first committed step in the biosynthesis of AMP from IMP. This chain is Adenylosuccinate synthetase, found in Streptococcus pyogenes serotype M3 (strain ATCC BAA-595 / MGAS315).